The following is a 299-amino-acid chain: Recombination-associated protein RdgC (299 aa).

Belongs to the RdgC family.

It localises to the cytoplasm. The protein localises to the nucleoid. In terms of biological role, may be involved in recombination. The protein is Recombination-associated protein RdgC of Cupriavidus pinatubonensis (strain JMP 134 / LMG 1197) (Cupriavidus necator (strain JMP 134)).